The sequence spans 419 residues: MSDEQIDKLVSRLDGALNRLGNVKKDHPLESSSNSKPTHQPKSPAPYRQKIEKLSAEVVDSNPYSRLMALQRMGIVNEYERIREKTVAVVGVGGVGSVVAEMLTRCGIGKLILFDYDKVEIANMNRLFYQPNQAGLSKVEAARDTLIHVNPDVQIEVHNFNITTMDNFDTFVNRIRKGSLTDGKIDLVLSCVDNFEARMAVNMACNEENQIWMESGVSENAVSGHIQYIEPGKTACFACVPPLVVASGIDERTLKRDGVCAASLPTTMAVVAGFLVMNTLKYLLNFGEVSQYVGYNALSDFFPRDSIKPNPYCDDSHCLQRQKEYEEKVANQPVDLEVEVPEEETVVHEDNEWGIELVNESEPSAEQSSSLNAGTGLKFAYEPIKRDAQTELSPAQAATHDFMKSIKDKLVEEAQNKGK.

The interval 18–47 (NRLGNVKKDHPLESSSNSKPTHQPKSPAPY) is disordered. Residues 30–41 (ESSSNSKPTHQP) are compositionally biased toward polar residues. Positions 94, 115, 138, 161, and 194 each coordinate ATP. Zn(2+)-binding residues include C236 and C239. Residue C260 is the Glycyl thioester intermediate of the active site. Residues C313 and C318 each contribute to the Zn(2+) site.

It belongs to the ubiquitin-activating E1 family. UBA5 subfamily. As to quaternary structure, interacts with ufc-1. Expressed in the intestine.

Its function is as follows. E1-like enzyme which activates ufm-1. Required for interaction between ufm-1 and ufc-1. The sequence is that of Ubiquitin-like modifier-activating enzyme 5 from Caenorhabditis elegans.